A 100-amino-acid polypeptide reads, in one-letter code: Urease subunit gamma (100 aa).

The protein belongs to the urease gamma subunit family. Heterotrimer of UreA (gamma), UreB (beta) and UreC (alpha) subunits. Three heterotrimers associate to form the active enzyme.

Its subcellular location is the cytoplasm. It carries out the reaction urea + 2 H2O + H(+) = hydrogencarbonate + 2 NH4(+). The protein operates within nitrogen metabolism; urea degradation; CO(2) and NH(3) from urea (urease route): step 1/1. The chain is Urease subunit gamma from Cyanothece sp. (strain PCC 7425 / ATCC 29141).